Here is a 1615-residue protein sequence, read N- to C-terminus: MEAAPPGPPWPLLLLLLLLLALCGCPAPAAASPLLLFANRRDVRLVDAGGVKLESTIVVSGLEDAAAVDFQFSKGAVYWTDVSEEAIKQTYLNQTGAAVQNVVISGLVSPDGLACDWVGKKLYWTDSETNRIEVANLNGTSRKVLFWQDLDQPRAIALDPAHGYMYWTDWGETPRIERAGMDGSTRKIIVDSDIYWPNGLTIDLEEQKLYWADAKLSFIHRANLDGSFRQKVVEGSLTHPFALTLSGDTLYWTDWQTRSIHACNKRTGGKRKEILSALYSPMDIQVLSQERQPFFHTRCEEDNGGCSHLCLLSPSEPFYTCACPTGVQLQDNGRTCKAGAEEVLLLARRTDLRRISLDTPDFTDIVLQVDDIRHAIAIDYDPLEGYVYWTDDEVRAIRRAYLDGSGAQTLVNTEINDPDGIAVDWVARNLYWTDTGTDRIEVTRLNGTSRKILVSEDLDEPRAIALHPVMGLMYWTDWGENPKIECANLDGQERRVLVNASLGWPNGLALDLQEGKLYWGDAKTDKIEVINVDGTKRRTLLEDKLPHIFGFTLLGDFIYWTDWQRRSIERVHKVKASRDVIIDQLPDLMGLKAVNVAKVVGTNPCADRNGGCSHLCFFTPHATRCGCPIGLELLSDMKTCIVPEAFLVFTSRAAIHRISLETNNNDVAIPLTGVKEASALDFDVSNNHIYWTDVSLKTISRAFMNGSSVEHVVEFGLDYPEGMAVDWMGKNLYWADTGTNRIEVARLDGQFRQVLVWRDLDNPRSLALDPTKGYIYWTEWGGKPRIVRAFMDGTNCMTLVDKVGRANDLTIDYADQRLYWTDLDTNMIESSNMLGQERVVIADDLPHPFGLTQYSDYIYWTDWNLHSIERADKTSGRNRTLIQGHLDFVMDILVFHSSRQDGLNDCMHNNGQCGQLCLAIPGGHRCGCASHYTLDPSSRNCSPPTTFLLFSQKSAISRMIPDDQHSPDLILPLHGLRNVKAIDYDPLDKFIYWVDGRQNIKRAKDDGTQPFVLTSLSQGQNPDRQPHDLSIDIYSRTLFWTCEATNTINVHRLSGEAMGVVLRGDRDKPRAIVVNAERGYLYFTNMQDRAAKIERAALDGTEREVLFTTGLIRPVALVVDNTLGKLFWVDADLKRIESCDLSGANRLTLEDANIVQPLGLTILGKHLYWIDRQQQMIERVEKTTGDKRTRIQGRVAHLTGIHAVEEVSLEEFSAHPCARDNGGCSHICIAKGDGTPRCSCPVHLVLLQNLLTCGEPPTCSPDQFACATGEIDCIPGAWRCDGFPECDDQSDEEGCPVCSAAQFPCARGQCVDLRLRCDGEADCQDRSDEADCDAICLPNQFRCASGQCVLIKQQCDSFPDCIDGSDELMCEITKPPSDDSPAHSSAIGPVIGIILSLFVMGGVYFVCQRVVCQRYAGANGPFPHEYVSGTPHVPLNFIAPGGSQHGPFTGIACGKSMMSSVSLMGGRGGVPLYDRNHVTGASSSSSSSTKATLYPPILNPPPSPATDPSLYNMDMFYSSNIPATARPYRPYIIRGMAPPTTPCSTDVCDSDYSASRWKASKYYLDLNSDSDPYPPPPTPHSQYLSAEDSCPPSPATERSYFHLFPPPPSPCTDSS.

Residues 1–31 form the signal peptide; sequence MEAAPPGPPWPLLLLLLLLLALCGCPAPAAA. Residues 32 to 288 form a beta-propeller 1 region; sequence SPLLLFANRR…YSPMDIQVLS (257 aa). The Extracellular portion of the chain corresponds to 32-1384; it reads SPLLLFANRR…PPSDDSPAHS (1353 aa). 5 LDL-receptor class B repeats span residues 75 to 119, 120 to 162, 163 to 206, 207 to 247, and 248 to 290; these read GAVY…DWVG, KKLY…DPAH, GYMY…DLEE, QKLY…TLSG, and DTLY…LSQE. A YWTD 1 repeat occupies 78-81; sequence YWTD. Asn-93 is a glycosylation site (N-linked (GlcNAc...) asparagine). The YWTD 2 repeat unit spans residues 123 to 126; it reads YWTD. The N-linked (GlcNAc...) asparagine glycan is linked to Asn-138. Residues 166-169 form a YWTD 3 repeat; sequence YWTD. The YWTD 4 repeat unit spans residues 251 to 254; it reads YWTD. The EGF-like 1 domain occupies 295–337; that stretch reads FHTRCEEDNGGCSHLCLLSPSEPFYTCACPTGVQLQDNGRTCK. Disulfide bonds link Cys-299–Cys-310, Cys-306–Cys-321, and Cys-323–Cys-336. The beta-propeller 2 stretch occupies residues 341-602; the sequence is EEVLLLARRT…AVNVAKVVGT (262 aa). 5 LDL-receptor class B repeats span residues 385–427, 428–470, 471–514, 515–557, and 558–600; these read GYVY…DWVA, RNLY…HPVM, GLMY…DLQE, GKLY…LGDF, and IYWT…AKVV. 2 YWTD repeats span residues 388 to 391 and 431 to 434; these read YWTD. The N-linked (GlcNAc...) asparagine glycan is linked to Asn-446. A YWTD 7 repeat occupies 474–477; sequence YWTD. The N-linked (GlcNAc...) asparagine glycan is linked to Asn-499. A YWTD 8 repeat occupies 559-562; the sequence is YWTD. The EGF-like 2 domain maps to 601-641; sequence GTNPCADRNGGCSHLCFFTPHATRCGCPIGLELLSDMKTCI. Cystine bridges form between Cys-605–Cys-616, Cys-612–Cys-625, and Cys-627–Cys-640. Residues 644 to 903 are beta-propeller 3; it reads EAFLVFTSRA…VFHSSRQDGL (260 aa). LDL-receptor class B repeat units lie at residues 687-729, 730-772, 773-815, 816-855, and 856-898; these read NHIY…DWMG, KNLY…DPTK, GYIY…DYAD, QRLY…TQYS, and DYIY…FHSS. The stretch at 690 to 693 is one YWTD 9 repeat; sequence YWTD. A glycan (N-linked (GlcNAc...) asparagine) is linked at Asn-705. YWTD repeat units lie at residues 819–822 and 859–862; these read YWTD. N-linked (GlcNAc...) asparagine glycosylation occurs at Asn-878. The EGF-like 3 domain maps to 902 to 942; that stretch reads GLNDCMHNNGQCGQLCLAIPGGHRCGCASHYTLDPSSRNCS. Disulfide bonds link Cys-906/Cys-917, Cys-913/Cys-926, and Cys-928/Cys-941. Residues 945-1212 form a beta-propeller 4 region; the sequence is TTFLLFSQKS…AVEEVSLEEF (268 aa). 5 LDL-receptor class B repeats span residues 989 to 1035, 1036 to 1078, 1079 to 1123, 1124 to 1164, and 1165 to 1207; these read KFIY…DIYS, RTLF…NAER, GYLY…DNTL, GKLF…TILG, and KHLY…VEEV. The region spanning 1213-1254 is the EGF-like 4 domain; that stretch reads SAHPCARDNGGCSHICIAKGDGTPRCSCPVHLVLLQNLLTCG. 12 cysteine pairs are disulfide-bonded: Cys-1217-Cys-1228, Cys-1224-Cys-1238, Cys-1240-Cys-1253, Cys-1259-Cys-1273, Cys-1266-Cys-1286, Cys-1280-Cys-1295, Cys-1298-Cys-1310, Cys-1305-Cys-1323, Cys-1317-Cys-1332, Cys-1336-Cys-1348, Cys-1343-Cys-1361, and Cys-1355-Cys-1370. LDL-receptor class A domains lie at 1258-1296, 1297-1333, and 1335-1371; these read TCSP…EGCP, VCSA…ADCD, and ICLP…LMCE. A helical transmembrane segment spans residues 1385–1407; sequence SAIGPVIGIILSLFVMGGVYFVC. Topologically, residues 1408 to 1615 are cytoplasmic; the sequence is QRVVCQRYAG…PPPSPCTDSS (208 aa). A disordered region spans residues 1475–1501; sequence RNHVTGASSSSSSSTKATLYPPILNPP. Positions 1500-1506 match the PPPSP motif A motif; it reads PPPSPAT. Positions 1538–1545 match the PPPSP motif B motif; sequence PPTTPCST. The interval 1568-1615 is disordered; that stretch reads SDSDPYPPPPTPHSQYLSAEDSCPPSPATERSYFHLFPPPPSPCTDSS. The short motif at 1574–1581 is the PPPSP motif C element; the sequence is PPPPTPHS. The PPPSP motif D signature appears at 1591–1596; sequence PPSPAT. Positions 1604-1615 are enriched in pro residues; that stretch reads FPPPPSPCTDSS. The PPPSP motif E signature appears at 1605–1612; the sequence is PPPPSPCT.

Belongs to the LDLR family. In terms of assembly, homodimer; disulfide-linked. Forms phosphorylated oligomer aggregates on Wnt-signaling. Component of a Wnt-signaling complex that contains a WNT protein, a FZD protein and LRP5 or LRP6. Interacts with FZD8; the interaction is formed on WNT-binding and signaling. Interacts (via the phosphorylated PPPSP motif domains) with AXIN1; the interaction prevents inhibition of beta-catenin phosphorylation and signaling and is enhanced in the presence of GSK3B and WNT1 or WNT3A. Interacts (via beta-propeller regions 3 and 4) with DKK1; the interaction, enhanced by MESD and/or KREMEN, inhibits beta-catenin signaling by preventing GSK3-mediated phosphorylation of the PPPSP motifs and subsequent, AXIN1 binding. Interacts with MESD; the interaction prevents the formation of LRP5 aggregates, targets LRP5 to the plasma membrane and, when complexed with KREMEN2, increases DKK1 binding. Interacts with CSNK1E. Interacts with SOST; the interaction antagonizes canonical Wnt signaling. Interacts with APCDD1. Interacts with CAPRIN2. In terms of processing, phosphorylation of cytoplasmic PPPSP motifs regulates the signal transduction of the Wnt signaling pathway through acting as a docking site for AXIN1. Widely expressed, with the highest level of expression in the liver and in aorta.

The protein resides in the membrane. It is found in the endoplasmic reticulum. Acts as a coreceptor with members of the frizzled family of seven-transmembrane spanning receptors to transduce signal by Wnt proteins. Activates the canonical Wnt signaling pathway that controls cell fate determination and self-renewal during embryonic development and adult tissue regeneration. In particular, may play an important role in the development of the posterior patterning of the epiblast during gastrulation. During bone development, regulates osteoblast proliferation and differentiation thus determining bone mass. Mechanistically, the formation of the signaling complex between Wnt ligand, frizzled receptor and LRP5 coreceptor promotes the recruitment of AXIN1 to LRP5, stabilizing beta-catenin/CTNNB1 and activating TCF/LEF-mediated transcriptional programs. Acts as a coreceptor for non-Wnt proteins, such as norrin/NDP. Binding of norrin/NDP to frizzled 4/FZD4-LRP5 receptor complex triggers beta-catenin/CTNNB1-dependent signaling known to be required for retinal vascular development. Plays a role in controlling postnatal vascular regression in retina via macrophage-induced endothelial cell apoptosis. This is Low-density lipoprotein receptor-related protein 5 from Homo sapiens (Human).